Here is a 396-residue protein sequence, read N- to C-terminus: Tryptophan synthase beta chain (396 aa).

N6-(pyridoxal phosphate)lysine is present on K88.

The protein belongs to the TrpB family. Tetramer of two alpha and two beta chains. Pyridoxal 5'-phosphate is required as a cofactor.

It catalyses the reaction (1S,2R)-1-C-(indol-3-yl)glycerol 3-phosphate + L-serine = D-glyceraldehyde 3-phosphate + L-tryptophan + H2O. It participates in amino-acid biosynthesis; L-tryptophan biosynthesis; L-tryptophan from chorismate: step 5/5. The beta subunit is responsible for the synthesis of L-tryptophan from indole and L-serine. In Actinobacillus pleuropneumoniae serotype 3 (strain JL03), this protein is Tryptophan synthase beta chain.